A 476-amino-acid polypeptide reads, in one-letter code: Aspartyl/glutamyl-tRNA(Asn/Gln) amidotransferase subunit B (476 aa).

It belongs to the GatB/GatE family. GatB subfamily. In terms of assembly, heterotrimer of A, B and C subunits.

The enzyme catalyses L-glutamyl-tRNA(Gln) + L-glutamine + ATP + H2O = L-glutaminyl-tRNA(Gln) + L-glutamate + ADP + phosphate + H(+). It carries out the reaction L-aspartyl-tRNA(Asn) + L-glutamine + ATP + H2O = L-asparaginyl-tRNA(Asn) + L-glutamate + ADP + phosphate + 2 H(+). In terms of biological role, allows the formation of correctly charged Asn-tRNA(Asn) or Gln-tRNA(Gln) through the transamidation of misacylated Asp-tRNA(Asn) or Glu-tRNA(Gln) in organisms which lack either or both of asparaginyl-tRNA or glutaminyl-tRNA synthetases. The reaction takes place in the presence of glutamine and ATP through an activated phospho-Asp-tRNA(Asn) or phospho-Glu-tRNA(Gln). The sequence is that of Aspartyl/glutamyl-tRNA(Asn/Gln) amidotransferase subunit B from Solidesulfovibrio magneticus (strain ATCC 700980 / DSM 13731 / RS-1) (Desulfovibrio magneticus).